Consider the following 247-residue polypeptide: Small ribosomal subunit protein eS6 (247 aa).

The tract at residues 194 to 247 (ALKKKRVTKKREDHAEYTKLLAQRMKEAKERKMERKRSNSRSKGDSIRESTSKK) is disordered. Residues 217–247 (RMKEAKERKMERKRSNSRSKGDSIRESTSKK) show a composition bias toward basic and acidic residues.

Belongs to the eukaryotic ribosomal protein eS6 family. Ribosomal protein S6 is the major substrate of protein kinases in eukaryote ribosomes.

In terms of biological role, component of the 40S small ribosomal subunit. Plays an important role in controlling cell growth and proliferation through the selective translation of particular classes of mRNA. The chain is Small ribosomal subunit protein eS6 (RPS6) from Aplysia californica (California sea hare).